Consider the following 216-residue polypeptide: uncharacterized protein (216 aa).

Residues 182 to 193 are compositionally biased toward polar residues; that stretch reads STSNASVNSDDA. The interval 182 to 204 is disordered; it reads STSNASVNSDDASTAELGPTSEE.

This is an uncharacterized protein from Caenorhabditis elegans.